Reading from the N-terminus, the 238-residue chain is Major prion protein (238 aa).

Residues 1 to 15 (MLVLFVATWSDLGLC) form the signal peptide. The interval 16 to 215 (KKRPKPGGWN…ESQAYYQRGS (200 aa)) is interaction with GRB2, ERI3 and SYN1. The interval 18–93 (RPKPGGWNTG…WHKPSKPKTS (76 aa)) is disordered. 4 tandem repeats follow at residues 44–52 (PQGGGGWGQ), 53–60 (PHGGGWGQ), 61–68 (PHGGGWGQ), and 69–76 (PHGGGWGQ). Residues 44–76 (PQGGGGWGQPHGGGWGQPHGGGWGQPHGGGWGQ) form a 4 X 8 AA tandem repeats of P-H-G-G-G-W-G-Q region. Positions 45 to 80 (QGGGGWGQPHGGGWGQPHGGGWGQPHGGGWGQGGGT) are enriched in gly residues. Residues Gly-47, Gly-48, His-54, Gly-55, Gly-56, His-62, Gly-63, Gly-64, His-70, Gly-71, and Gly-72 each coordinate Cu(2+). Basic residues predominate over residues 83-93 (QWHKPSKPKTS). Cys-164 and Cys-199 form a disulfide bridge. Residues Asn-166 and Asn-182 are each glycosylated (N-linked (GlcNAc...) asparagine). The GPI-anchor amidated serine moiety is linked to residue Ser-215. A propeptide spans 216–238 (SMVLFSSPPVILLISFLIFLIVG) (removed in mature form).

The protein belongs to the prion family. As to quaternary structure, monomer and homodimer. Has a tendency to aggregate into amyloid fibrils containing a cross-beta spine, formed by a steric zipper of superposed beta-strands. Soluble oligomers may represent an intermediate stage on the path to fibril formation. Copper binding may promote oligomerization. Interacts with GRB2, APP, ERI3/PRNPIP and SYN1. Mislocalized cytosolically exposed PrP interacts with MGRN1; this interaction alters MGRN1 subcellular location and causes lysosomal enlargement. Interacts with KIAA1191.

The protein resides in the cell membrane. Its subcellular location is the golgi apparatus. Its function is as follows. Its primary physiological function is unclear. Has cytoprotective activity against internal or environmental stresses. May play a role in neuronal development and synaptic plasticity. May be required for neuronal myelin sheath maintenance. May play a role in iron uptake and iron homeostasis. Soluble oligomers are toxic to cultured neuroblastoma cells and induce apoptosis (in vitro). Association with GPC1 (via its heparan sulfate chains) targets PRNP to lipid rafts. Also provides Cu(2+) or Zn(2+) for the ascorbate-mediated GPC1 deaminase degradation of its heparan sulfate side chains. The polypeptide is Major prion protein (PRNP) (Macaca sylvanus (Barbary macaque)).